We begin with the raw amino-acid sequence, 587 residues long: Membrane protein insertase YidC (587 aa).

The next 5 helical transmembrane spans lie at 5–25 (SVIG…FMKP), 365–385 (GLII…LSLA), 430–450 (LGGC…FYVF), 480–500 (LPLY…TVFF), and 516–536 (IMIW…PSGL).

This sequence belongs to the OXA1/ALB3/YidC family. Type 1 subfamily. Interacts with the Sec translocase complex via SecD. Specifically interacts with transmembrane segments of nascent integral membrane proteins during membrane integration.

Its subcellular location is the cell inner membrane. Functionally, required for the insertion and/or proper folding and/or complex formation of integral membrane proteins into the membrane. Involved in integration of membrane proteins that insert both dependently and independently of the Sec translocase complex, as well as at least some lipoproteins. Aids folding of multispanning membrane proteins. This Chlorobaculum parvum (strain DSM 263 / NCIMB 8327) (Chlorobium vibrioforme subsp. thiosulfatophilum) protein is Membrane protein insertase YidC.